The primary structure comprises 372 residues: Tubby-like F-box protein 9 (372 aa).

A disordered region spans residues Met1–Arg51. Residues Ser7–Ser18 show a composition bias toward low complexity. Acidic residues predominate over residues Gly40–Glu49. Residues Glu50–Gly105 form the F-box domain.

This sequence belongs to the TUB family. As to expression, ubiquitous.

This is Tubby-like F-box protein 9 (TULP9) from Oryza sativa subsp. japonica (Rice).